Here is a 380-residue protein sequence, read N- to C-terminus: E3 ubiquitin-protein ligase RNF13 (380 aa).

Positions 1 to 34 (MLLSIGMLMLSATQVYTILTVQLFAFLNLLPVEA) are cleaved as a signal peptide. Residues 35–182 (DILAYNFENA…VPELSLPLEY (148 aa)) are Lumenal-facing. The region spanning 64–160 (LKGFLINSKP…GESSANSLKD (97 aa)) is the PA domain. A glycan (N-linked (GlcNAc...) asparagine) is linked at Asn88. The helical transmembrane segment at 183-203 (YLIPFLIIVGICLILIVIFMI) threads the bilayer. The Cytoplasmic portion of the chain corresponds to 204–380 (TKFVQDRHRN…EPDYNIANTV (177 aa)). The RING-type; atypical zinc finger occupies 240-282 (CAICLEEYEDGDKLRILPCSHAYHCKCVDPWLTKTKKTCPVCK). Residues 285-380 (VVPSQGDSDS…EPDYNIANTV (96 aa)) form a disordered region. Residues 338–356 (SDYEDDDNEETDSSDADNE) are compositionally biased toward acidic residues.

In terms of assembly, interacts with ERN1. In terms of processing, autoubiquitinated.

It localises to the endoplasmic reticulum membrane. The protein localises to the late endosome membrane. It is found in the lysosome membrane. The protein resides in the nucleus inner membrane. The enzyme catalyses S-ubiquitinyl-[E2 ubiquitin-conjugating enzyme]-L-cysteine + [acceptor protein]-L-lysine = [E2 ubiquitin-conjugating enzyme]-L-cysteine + N(6)-ubiquitinyl-[acceptor protein]-L-lysine.. It functions in the pathway protein modification; protein ubiquitination. Its function is as follows. E3 ubiquitin-protein ligase that regulates cell proliferation. Involved in apoptosis regulation. Mediates ER stress-induced activation of JNK signaling pathway and apoptosis by promoting ERN1 activation and splicing of XBP1 mRNA. Also involved in protein trafficking and localization. In Rattus norvegicus (Rat), this protein is E3 ubiquitin-protein ligase RNF13 (Rnf13).